A 143-amino-acid chain; its full sequence is MSLTARDKSVVNAFWGKIKGKADVVGAEALGRMLTAYPQTKTYFSHWADLSPGSAPVKKHGGVIMGAIGNAVGLMDDLVGGMSGLSDLHAFKLRVDPGNFKILSHNILVTLAIHFPADFTPEVHIAVDKFLAALSAALADKYR.

The Globin domain occupies serine 2–arginine 143. Histidine 60 serves as a coordination point for O2. Histidine 89 is a binding site for heme b.

Belongs to the globin family. In terms of assembly, heterotetramer of two alpha chains and two beta chains. Red blood cells.

Its function is as follows. Involved in oxygen transport from gills to the various peripheral tissues. The protein is Hemoglobin subunit alpha (hba) of Salmo salar (Atlantic salmon).